Consider the following 200-residue polypeptide: Small ribosomal subunit protein uS4 (200 aa).

Positions 92–155 (SRLDAVVYQL…QKLNIIAESV (64 aa)) constitute an S4 RNA-binding domain.

This sequence belongs to the universal ribosomal protein uS4 family. In terms of assembly, part of the 30S ribosomal subunit. Contacts protein S5. The interaction surface between S4 and S5 is involved in control of translational fidelity.

In terms of biological role, one of the primary rRNA binding proteins, it binds directly to 16S rRNA where it nucleates assembly of the body of the 30S subunit. With S5 and S12 plays an important role in translational accuracy. In Macrococcus caseolyticus (strain JCSC5402) (Macrococcoides caseolyticum), this protein is Small ribosomal subunit protein uS4.